Here is a 114-residue protein sequence, read N- to C-terminus: Beta-microseminoprotein (114 aa).

An N-terminal signal peptide occupies residues 1 to 20; it reads MNVLLGSVVIFATFVTLCNA. 5 disulfide bridges follow: C22–C70, C38–C62, C57–C93, C60–C69, and C84–C107.

It belongs to the beta-microseminoprotein family. In terms of assembly, homodimer; Interacts with PI16. In terms of tissue distribution, strongly expressed in prostate, liver, kidney, breast and penis. Also expressed in pancreas, esophagus, stomach, deodenum, colon, trachea, lung, salivary glands and fallopian tube. PSP94 is expressed in lung and breast, whereas PSP57 is found in kidney and bladder.

Its subcellular location is the secreted. This is Beta-microseminoprotein (MSMB) from Homo sapiens (Human).